We begin with the raw amino-acid sequence, 134 residues long: MSWQAYVDDHLMCDIEGHEGHRLTAAAIVGHDGSVWAQSATFPQFKPEEMNGIMTDFNEPGHLAPTGLHLGGTKYMVIQGEAGAVIRGKKGSGGITIKKTGQALVFGIYEEPVAPGQCNMVVERLGDYLLEQGL.

A disulfide bridge links C13 with C118. Positions 84 to 100 match the Involved in PIP2 interaction motif; sequence AVIRGKKGSGGITIKKT.

The protein belongs to the profilin family. As to quaternary structure, occurs in many kinds of cells as a complex with monomeric actin in a 1:1 ratio. Post-translationally, phosphorylated by MAP kinases.

The protein localises to the cytoplasm. It is found in the cytoskeleton. Functionally, binds to actin and affects the structure of the cytoskeleton. At high concentrations, profilin prevents the polymerization of actin, whereas it enhances it at low concentrations. The polypeptide is Profilin-3 (Olea europaea (Common olive)).